The following is a 300-amino-acid chain: ADP-polyphosphate phosphotransferase 1 (300 aa).

The protein belongs to the polyphosphate kinase 2 (PPK2) family. Class I subfamily. As to quaternary structure, homotetramer. Mg(2+) is required as a cofactor.

It catalyses the reaction [phosphate](n) + ATP = [phosphate](n+1) + ADP. The catalysed reaction is [phosphate](n) + GTP = [phosphate](n+1) + GDP. Its function is as follows. Uses inorganic polyphosphate (polyP) as a donor to convert ADP to ATP. Can also convert GDP to GTP, with lower efficiency. Cannot dephosphorylate ATP in the presence of polyP. The sequence is that of ADP-polyphosphate phosphotransferase 1 from Rhizobium meliloti (strain 1021) (Ensifer meliloti).